The primary structure comprises 430 residues: uncharacterized protein (430 aa).

A run of 12 helical transmembrane segments spans residues 36–56 (LFVV…GVTV), 69–89 (AFAG…ALIV), 100–122 (TGLS…AAII), 126–148 (FLLF…ARYA), 160–180 (TAVS…PSLV), 197–217 (GPFI…FIML), 253–273 (IIVG…IMTM), 285–305 (LGAV…PSLV), 317–337 (AMAI…AFAP), 340–360 (SMIL…FGLI), 384–404 (VLIA…VAGS), and 406–426 (YLAL…VVVW).

Belongs to the major facilitator superfamily.

Its subcellular location is the cell membrane. This is an uncharacterized protein from Bacillus subtilis (strain 168).